A 189-amino-acid chain; its full sequence is RxLR effector protein CRE18 (189 aa).

The N-terminal stretch at 1 to 23 (MSKLFYAFAVLAVHVLTSSPTTA) is a signal peptide. The RxLR-dEER motif lies at 47-68 (RFLRSIHEGEDSLKPSAFSEER).

It belongs to the RxLR effector family.

The protein localises to the secreted. It localises to the host cytoplasm. It is found in the host nucleus. Effector that is involved in host plant infection. Contributes to virulence during the early infection stage, by inhibiting plant defense responses induced by both PAMP-triggered immunity (PTI) and effector-triggered immunity (ETI). The polypeptide is RxLR effector protein CRE18 (Phytophthora infestans (strain T30-4) (Potato late blight agent)).